Here is a 209-residue protein sequence, read N- to C-terminus: tRNA(Phe) 7-((3-amino-3-carboxypropyl)-4-demethylwyosine(37)-N(4))-methyltransferase (209 aa).

Belongs to the TYW3 family.

The enzyme catalyses 4-demethyl-7-[(3S)-3-amino-3-carboxypropyl]wyosine(37) in tRNA(Phe) + S-adenosyl-L-methionine = 7-[(3S)-3-amino-3-carboxypropyl]wyosine(37) in tRNA(Phe) + S-adenosyl-L-homocysteine + H(+). In terms of biological role, S-adenosyl-L-methionine-dependent methyltransferase that acts as a component of the wyosine derivatives biosynthesis pathway. Probably methylates N-4 position of wybutosine-86 to produce wybutosine-72. This is tRNA(Phe) 7-((3-amino-3-carboxypropyl)-4-demethylwyosine(37)-N(4))-methyltransferase from Saccharolobus solfataricus (strain ATCC 35092 / DSM 1617 / JCM 11322 / P2) (Sulfolobus solfataricus).